Reading from the N-terminus, the 178-residue chain is Endothelin-2 (178 aa).

Positions methionine 1–aspartate 24 are cleaved as a signal peptide. Positions glutamine 25–leucine 46 are excised as a propeptide. Cystine bridges form between cysteine 49–cysteine 63 and cysteine 51–cysteine 59. The propeptide occupies valine 70–arginine 178. Residues cysteine 96–histidine 111 form an endothelin-like region. The disordered stretch occupies residues lysine 154–arginine 178. Residues arginine 160–threonine 170 are compositionally biased toward basic and acidic residues.

It belongs to the endothelin/sarafotoxin family.

It is found in the secreted. Its function is as follows. Endothelins are endothelium-derived vasoconstrictor peptides. This Oryctolagus cuniculus (Rabbit) protein is Endothelin-2 (EDN2).